Reading from the N-terminus, the 489-residue chain is Ribulose bisphosphate carboxylase large chain 2 (489 aa).

Positions 128 and 178 each coordinate substrate. K180 acts as the Proton acceptor in catalysis. K182 contributes to the substrate binding site. The Mg(2+) site is built by K206, D208, and E209. The residue at position 206 (K206) is an N6-carboxylysine. The Proton acceptor role is filled by H298. Substrate-binding residues include R299, H331, and S383.

It belongs to the RuBisCO large chain family. Type I subfamily. In terms of assembly, heterohexadecamer of 8 large chains and 8 small chains. It depends on Mg(2+) as a cofactor.

It catalyses the reaction 2 (2R)-3-phosphoglycerate + 2 H(+) = D-ribulose 1,5-bisphosphate + CO2 + H2O. The enzyme catalyses D-ribulose 1,5-bisphosphate + O2 = 2-phosphoglycolate + (2R)-3-phosphoglycerate + 2 H(+). Functionally, ruBisCO catalyzes two reactions: the carboxylation of D-ribulose 1,5-bisphosphate, the primary event in carbon dioxide fixation, as well as the oxidative fragmentation of the pentose substrate. Both reactions occur simultaneously and in competition at the same active site. The sequence is that of Ribulose bisphosphate carboxylase large chain 2 from Nitrobacter winogradskyi (strain ATCC 25391 / DSM 10237 / CIP 104748 / NCIMB 11846 / Nb-255).